The sequence spans 82 residues: Diptericin-A (82 aa).

2 disordered regions span residues 1–32 (DEKP…DGFG) and 45–69 (DNGG…GNSR). F82 carries the post-translational modification Phenylalanine amide.

This sequence belongs to the attacin/sarcotoxin-2 family.

It localises to the secreted. Antimicrobial peptide required to resist Gram-negative bacterial infections, regulated by Dredd. The protein is Diptericin-A of Protophormia terraenovae (Northern blowfly).